The primary structure comprises 179 residues: Inosine/xanthosine triphosphatase (179 aa).

Position 8 to 13 (8 to 13 (TTNPAK)) interacts with substrate. Residues D38 and E68 each contribute to the Mg(2+) site. 68–69 (EA) is a binding site for substrate.

Belongs to the YjjX NTPase family. As to quaternary structure, homodimer. Requires Mg(2+) as cofactor. Mn(2+) serves as cofactor.

The enzyme catalyses XTP + H2O = XDP + phosphate + H(+). It carries out the reaction ITP + H2O = IDP + phosphate + H(+). Functionally, phosphatase that hydrolyzes non-canonical purine nucleotides such as XTP and ITP to their respective diphosphate derivatives. Probably excludes non-canonical purines from DNA/RNA precursor pool, thus preventing their incorporation into DNA/RNA and avoiding chromosomal lesions. This Proteus mirabilis (strain HI4320) protein is Inosine/xanthosine triphosphatase.